Reading from the N-terminus, the 86-residue chain is Large ribosomal subunit protein uL23 (86 aa).

The protein belongs to the universal ribosomal protein uL23 family. In terms of assembly, part of the 50S ribosomal subunit. Contacts protein L29.

Functionally, binds to 23S rRNA. One of the proteins that surrounds the polypeptide exit tunnel on the outside of the ribosome. The sequence is that of Large ribosomal subunit protein uL23 from Thermococcus kodakarensis (strain ATCC BAA-918 / JCM 12380 / KOD1) (Pyrococcus kodakaraensis (strain KOD1)).